The following is an 842-amino-acid chain: Molybdenum cofactor sulfurase (842 aa).

Position 236 is an N6-(pyridoxal phosphate)lysine (Lys236). Residue Cys402 is part of the active site. The tract at residues 637–680 is disordered; that stretch reads PGSQHGDAQRSSKARLQKHQITTDQESDVQEVHPGSGTTTDSTW. Positions 663-831 constitute an MOSC domain; it reads SDVQEVHPGS…AARGDVAYPT (169 aa).

The protein belongs to the class-V pyridoxal-phosphate-dependent aminotransferase family. MOCOS subfamily. Pyridoxal 5'-phosphate is required as a cofactor.

It carries out the reaction Mo-molybdopterin + L-cysteine + AH2 = thio-Mo-molybdopterin + L-alanine + A + H2O. The protein operates within cofactor biosynthesis; molybdopterin biosynthesis. Its function is as follows. Sulfurates the molybdenum cofactor. Sulfation of molybdenum is essential for xanthine dehydrogenase (XDH) and aldehyde oxidase (ADO) enzymes in which molybdenum cofactor is liganded by 1 oxygen and 1 sulfur atom in active form. This chain is Molybdenum cofactor sulfurase, found in Pyricularia oryzae (strain 70-15 / ATCC MYA-4617 / FGSC 8958) (Rice blast fungus).